The primary structure comprises 342 residues: Biotin synthase (342 aa).

The 228-residue stretch at asparagine 63 to arginine 290 folds into the Radical SAM core domain. [4Fe-4S] cluster-binding residues include cysteine 78, cysteine 82, and cysteine 85. Cysteine 122, cysteine 153, cysteine 213, and arginine 285 together coordinate [2Fe-2S] cluster.

Belongs to the radical SAM superfamily. Biotin synthase family. In terms of assembly, homodimer. [4Fe-4S] cluster is required as a cofactor. [2Fe-2S] cluster serves as cofactor.

It catalyses the reaction (4R,5S)-dethiobiotin + (sulfur carrier)-SH + 2 reduced [2Fe-2S]-[ferredoxin] + 2 S-adenosyl-L-methionine = (sulfur carrier)-H + biotin + 2 5'-deoxyadenosine + 2 L-methionine + 2 oxidized [2Fe-2S]-[ferredoxin]. It participates in cofactor biosynthesis; biotin biosynthesis; biotin from 7,8-diaminononanoate: step 2/2. In terms of biological role, catalyzes the conversion of dethiobiotin (DTB) to biotin by the insertion of a sulfur atom into dethiobiotin via a radical-based mechanism. The chain is Biotin synthase from Cupriavidus pinatubonensis (strain JMP 134 / LMG 1197) (Cupriavidus necator (strain JMP 134)).